The following is a 322-amino-acid chain: 26S proteasome non-ATPase regulatory subunit 7 (322 aa).

The MPN domain maps to 9–144 (VVVHPLVLLS…TEAYISVEEV (136 aa)). K180 is covalently cross-linked (Glycyl lysine isopeptide (Lys-Gly) (interchain with G-Cter in ubiquitin)). 4 positions are modified to N6-acetyllysine: K204, K214, K314, and K315. The interval 281–322 (ANRDAEKKEGQEKEDSKKDRKDDKEKEKEKSDVKKEEKKEKK) is disordered.

Belongs to the peptidase M67A family. As to quaternary structure, component of the 19S proteasome regulatory particle complex. The 26S proteasome consists of a 20S core particle (CP) and two 19S regulatory subunits (RP). The regulatory particle is made of a lid composed of 9 subunits including PSMD7, a base containing 6 ATPases and few additional components. Within the complex, PSMD7 interacts with subunit PSMD4 through their respective MPN domain. Interacts with TRIM5.

Its function is as follows. Component of the 26S proteasome, a multiprotein complex involved in the ATP-dependent degradation of ubiquitinated proteins. This complex plays a key role in the maintenance of protein homeostasis by removing misfolded or damaged proteins, which could impair cellular functions, and by removing proteins whose functions are no longer required. Therefore, the proteasome participates in numerous cellular processes, including cell cycle progression, apoptosis, or DNA damage repair. This Bos taurus (Bovine) protein is 26S proteasome non-ATPase regulatory subunit 7 (PSMD7).